Here is a 313-residue protein sequence, read N- to C-terminus: Ribosomal RNA small subunit methyltransferase H (313 aa).

S-adenosyl-L-methionine-binding positions include 34-36 (GGH), D54, F81, D102, and Q109. Residues 289–313 (IAGPEETDRNPRARSAKLRAAEKLG) form a disordered region.

Belongs to the methyltransferase superfamily. RsmH family.

The protein resides in the cytoplasm. It catalyses the reaction cytidine(1402) in 16S rRNA + S-adenosyl-L-methionine = N(4)-methylcytidine(1402) in 16S rRNA + S-adenosyl-L-homocysteine + H(+). In terms of biological role, specifically methylates the N4 position of cytidine in position 1402 (C1402) of 16S rRNA. The protein is Ribosomal RNA small subunit methyltransferase H of Trichlorobacter lovleyi (strain ATCC BAA-1151 / DSM 17278 / SZ) (Geobacter lovleyi).